The primary structure comprises 320 residues: Glyoxylate/hydroxypyruvate reductase B (320 aa).

Catalysis depends on residues arginine 233 and glutamate 262. Histidine 281 serves as the catalytic Proton donor.

It belongs to the D-isomer specific 2-hydroxyacid dehydrogenase family. GhrB subfamily. As to quaternary structure, homodimer.

The protein resides in the cytoplasm. The catalysed reaction is glycolate + NADP(+) = glyoxylate + NADPH + H(+). It catalyses the reaction (R)-glycerate + NAD(+) = 3-hydroxypyruvate + NADH + H(+). It carries out the reaction (R)-glycerate + NADP(+) = 3-hydroxypyruvate + NADPH + H(+). Its function is as follows. Catalyzes the NADPH-dependent reduction of glyoxylate and hydroxypyruvate into glycolate and glycerate, respectively. The chain is Glyoxylate/hydroxypyruvate reductase B from Pectobacterium carotovorum subsp. carotovorum (strain PC1).